The following is a 694-amino-acid chain: Elongation factor G (694 aa).

In terms of domain architecture, tr-type G spans E8 to T287. GTP is bound by residues A17 to T24, D86 to H90, and N140 to D143.

It belongs to the TRAFAC class translation factor GTPase superfamily. Classic translation factor GTPase family. EF-G/EF-2 subfamily.

Its subcellular location is the cytoplasm. Catalyzes the GTP-dependent ribosomal translocation step during translation elongation. During this step, the ribosome changes from the pre-translocational (PRE) to the post-translocational (POST) state as the newly formed A-site-bound peptidyl-tRNA and P-site-bound deacylated tRNA move to the P and E sites, respectively. Catalyzes the coordinated movement of the two tRNA molecules, the mRNA and conformational changes in the ribosome. The polypeptide is Elongation factor G (Brucella canis (strain ATCC 23365 / NCTC 10854 / RM-666)).